Here is a 149-residue protein sequence, read N- to C-terminus: Large ribosomal subunit protein uL15 (149 aa).

Residues 1-52 (MSELLKLHHLRPAPGSNKAKIRKGRGEASKGKTAGRGTKGTKARSTVPAGFE) form a disordered region.

The protein belongs to the universal ribosomal protein uL15 family. As to quaternary structure, part of the 50S ribosomal subunit.

In terms of biological role, binds to the 23S rRNA. The sequence is that of Large ribosomal subunit protein uL15 from Thermobifida fusca (strain YX).